Consider the following 235-residue polypeptide: Ferric nitrobindin-like protein (235 aa).

Residues 1–59 (MSDLASEGSDPAERASEHSNGNAPADRPARRSGDQAVADAAERAKATGSRNIPVLPDLP) form a disordered region. Residues 85–91 (GVWRGEG) carry the GXWXGXG motif.

Belongs to the nitrobindin family.

The polypeptide is Ferric nitrobindin-like protein (Nocardia farcinica (strain IFM 10152)).